The primary structure comprises 217 residues: MVVIGEKFPEVEVTTTHGKLKLPEHYIESGKWFVLFSHPGDFTPVCTTEFVAFQKRYDQFRELNTELIGLSIDQVFSHIKWVEWIKEKLDVDIEFPIIADDRGELAVKLGMISPYKGNNTVRAVFVVDATGTIRAIIYYPQEVGRNMDEIVRLVKALQTADKGYATPANWPNNDFLNEKVIVPPANNMDARKKRLEACKSGELEGYDWWFCYTDLKE.

The 158-residue stretch at 2 to 159 (VVIGEKFPEV…IVRLVKALQT (158 aa)) folds into the Thioredoxin domain. Catalysis depends on Cys-46, which acts as the Cysteine sulfenic acid (-SOH) intermediate. Arg-122 is a substrate binding site.

It belongs to the peroxiredoxin family. Prx6 subfamily. In terms of assembly, homodecamer. Pentamer of dimers that assemble into a ring structure.

Its subcellular location is the cytoplasm. It catalyses the reaction a hydroperoxide + [thioredoxin]-dithiol = an alcohol + [thioredoxin]-disulfide + H2O. In terms of biological role, thiol-specific peroxidase that catalyzes the reduction of hydrogen peroxide and organic hydroperoxides to water and alcohols, respectively. Plays a role in cell protection against oxidative stress by detoxifying peroxides. The polypeptide is Peroxiredoxin (Methanococcus maripaludis (strain DSM 14266 / JCM 13030 / NBRC 101832 / S2 / LL)).